The following is a 297-amino-acid chain: Alpha-tubulin N-acetyltransferase 1 (297 aa).

One can recognise an N-acetyltransferase domain in the interval 1–186 (MEFDFDVHKI…NNFVVFDGFF (186 aa)). Acetyl-CoA contacts are provided by residues 120–133 (FYIH…GFGK) and 156–165 (SEKFLSFLRK). The segment at 269-297 (LHRTANSEQEDHSQRRRTSSLNRPQSIHH) is disordered. Positions 287 to 297 (SSLNRPQSIHH) are enriched in polar residues.

It belongs to the acetyltransferase ATAT1 family.

The protein localises to the cytoplasm. It is found in the membrane. Its subcellular location is the clathrin-coated pit. The protein resides in the cell junction. It localises to the focal adhesion. The protein localises to the cell projection. It is found in the axon. Its subcellular location is the cytoskeleton. The protein resides in the spindle. The enzyme catalyses L-lysyl-[alpha-tubulin] + acetyl-CoA = N(6)-acetyl-L-lysyl-[alpha-tubulin] + CoA + H(+). In terms of biological role, specifically acetylates 'Lys-40' in alpha-tubulin on the lumenal side of microtubules. Promotes microtubule destabilization and accelerates microtubule dynamics; this activity may be independent of acetylation activity. Acetylates alpha-tubulin with a slow enzymatic rate, due to a catalytic site that is not optimized for acetyl transfer. Enters the microtubule through each end and diffuses quickly throughout the lumen of microtubules. Acetylates only long/old microtubules because of its slow acetylation rate since it does not have time to act on dynamically unstable microtubules before the enzyme is released. May be involved in neuron development. The protein is Alpha-tubulin N-acetyltransferase 1 of Xenopus tropicalis (Western clawed frog).